The primary structure comprises 609 residues: Glutamine--fructose-6-phosphate aminotransferase [isomerizing] (609 aa).

The active-site Nucleophile; for GATase activity is Cys-2. The Glutamine amidotransferase type-2 domain occupies 2-217; that stretch reads CGIVGYIGRR…EGWLAELTPE (216 aa). SIS domains lie at 286–425 and 458–599; these read SAAE…QNGR and AAEA…VDKP. Lys-604 serves as the catalytic For Fru-6P isomerization activity.

As to quaternary structure, homodimer.

It is found in the cytoplasm. It catalyses the reaction D-fructose 6-phosphate + L-glutamine = D-glucosamine 6-phosphate + L-glutamate. Functionally, catalyzes the first step in hexosamine metabolism, converting fructose-6P into glucosamine-6P using glutamine as a nitrogen source. The polypeptide is Glutamine--fructose-6-phosphate aminotransferase [isomerizing] (Symbiobacterium thermophilum (strain DSM 24528 / JCM 14929 / IAM 14863 / T)).